The sequence spans 206 residues: Large ribosomal subunit protein uL4 (206 aa).

The disordered stretch occupies residues 60–84; that stretch reads TAKPFKQKGTGHARQGSKRSPQFRG. A compositionally biased stretch (basic residues) spans 64-76; that stretch reads FKQKGTGHARQGS.

The protein belongs to the universal ribosomal protein uL4 family. Part of the 50S ribosomal subunit.

In terms of biological role, one of the primary rRNA binding proteins, this protein initially binds near the 5'-end of the 23S rRNA. It is important during the early stages of 50S assembly. It makes multiple contacts with different domains of the 23S rRNA in the assembled 50S subunit and ribosome. Functionally, forms part of the polypeptide exit tunnel. This is Large ribosomal subunit protein uL4 from Rhodospirillum rubrum (strain ATCC 11170 / ATH 1.1.1 / DSM 467 / LMG 4362 / NCIMB 8255 / S1).